Here is a 280-residue protein sequence, read N- to C-terminus: DCN1-like protein 4 (280 aa).

The tract at residues Gly-37–Gln-71 is disordered. Residues Phe-89 to Lys-275 form the DCUN1 domain.

May interact (via the DCUN1 domain) with unneddylated cullins.

The protein localises to the nucleus. Contributes to the neddylation of all cullins by transferring NEDD8 from N-terminally acetylated NEDD8-conjugating E2s enzyme to different cullin C-terminal domain-RBX complexes. This chain is DCN1-like protein 4, found in Danio rerio (Zebrafish).